The primary structure comprises 168 residues: 3'-5' exoribonuclease MT2234.1 (168 aa).

Mg(2+) is bound at residue D6. The segment at 6–9 (DTEF) is RNA binding.

In terms of assembly, homodimer. Mg(2+) is required as a cofactor.

Functionally, exonuclease that cleaves single-stranded 3' overhangs of double-stranded RNA. In Mycobacterium tuberculosis (strain CDC 1551 / Oshkosh), this protein is 3'-5' exoribonuclease MT2234.1.